A 160-amino-acid polypeptide reads, in one-letter code: Globin CTT-Y (160 aa).

An N-terminal signal peptide occupies residues 1–16 (MKVLAIFALCIIGALA). The region spanning 17–160 (TPCDDFKIMQ…IRKVINANLE (144 aa)) is the Globin domain. 2 residues coordinate heme b: His74 and His109.

Belongs to the globin family.

In Chironomus thummi piger (Midge), this protein is Globin CTT-Y (CTT-Y).